Consider the following 150-residue polypeptide: SsrA-binding protein (150 aa).

Belongs to the SmpB family.

Its subcellular location is the cytoplasm. In terms of biological role, required for rescue of stalled ribosomes mediated by trans-translation. Binds to transfer-messenger RNA (tmRNA), required for stable association of tmRNA with ribosomes. tmRNA and SmpB together mimic tRNA shape, replacing the anticodon stem-loop with SmpB. tmRNA is encoded by the ssrA gene; the 2 termini fold to resemble tRNA(Ala) and it encodes a 'tag peptide', a short internal open reading frame. During trans-translation Ala-aminoacylated tmRNA acts like a tRNA, entering the A-site of stalled ribosomes, displacing the stalled mRNA. The ribosome then switches to translate the ORF on the tmRNA; the nascent peptide is terminated with the 'tag peptide' encoded by the tmRNA and targeted for degradation. The ribosome is freed to recommence translation, which seems to be the essential function of trans-translation. In Nitratiruptor sp. (strain SB155-2), this protein is SsrA-binding protein.